We begin with the raw amino-acid sequence, 142 residues long: Translation initiation factor 2 subunit beta (142 aa).

The protein belongs to the eIF-2-beta/eIF-5 family. As to quaternary structure, heterotrimer composed of an alpha, a beta and a gamma chain.

Its function is as follows. eIF-2 functions in the early steps of protein synthesis by forming a ternary complex with GTP and initiator tRNA. This chain is Translation initiation factor 2 subunit beta, found in Thermococcus kodakarensis (strain ATCC BAA-918 / JCM 12380 / KOD1) (Pyrococcus kodakaraensis (strain KOD1)).